The following is a 182-amino-acid chain: MAKRFLLLLPLLSSILLLAVSVTAYSTTTPYQGYKPEKFTHLHFYFHDVISGDKPTAVKVAEARPTTTLNVKFGVIMIADDPLTEGPDPSSKEVGRAQGMYASTAMKDIVFTMVFNYVFTAGEFNGSTIAVYGRNDIFSKVRELPIIGGTGAFRFARGYALPKTYKIVGLDAVVEYNVFIWH.

The signal sequence occupies residues 1 to 24; it reads MAKRFLLLLPLLSSILLLAVSVTA. Residue Asn125 is glycosylated (N-linked (GlcNAc...) asparagine).

Belongs to the plant dirigent protein family. In terms of assembly, homodimer.

The protein resides in the secreted. It is found in the extracellular space. It localises to the apoplast. Functionally, dirigent proteins impart stereoselectivity on the phenoxy radical-coupling reaction, yielding optically active lignans from two molecules of coniferyl alcohol in the biosynthesis of lignans, flavonolignans, and alkaloids and thus plays a central role in plant secondary metabolism. The sequence is that of Dirigent protein 1 (DIR1) from Arabidopsis thaliana (Mouse-ear cress).